Reading from the N-terminus, the 578-residue chain is Probable arginine--tRNA ligase, mitochondrial (578 aa).

The transit peptide at methionine 1–valine 16 directs the protein to the mitochondrion. L-arginine-binding positions include serine 133–asparagine 135, histidine 144, tyrosine 322, aspartate 326, and glutamine 350. Positions serine 133 to histidine 144 match the 'HIGH' region motif. Lysine 568 carries the post-translational modification N6-acetyllysine.

Belongs to the class-I aminoacyl-tRNA synthetase family.

Its subcellular location is the mitochondrion membrane. It catalyses the reaction tRNA(Arg) + L-arginine + ATP = L-arginyl-tRNA(Arg) + AMP + diphosphate. Its function is as follows. Catalyzes the attachment of arginine to tRNA(Arg) in a two-step reaction: arginine is first activated by ATP to form Arg-AMP and then transferred to the acceptor end of tRNA(Arg). This chain is Probable arginine--tRNA ligase, mitochondrial (RARS2), found in Homo sapiens (Human).